A 180-amino-acid chain; its full sequence is Large ribosomal subunit protein uL5 (180 aa).

It belongs to the universal ribosomal protein uL5 family. In terms of assembly, part of the 50S ribosomal subunit; part of the 5S rRNA/L5/L18/L25 subcomplex. Contacts the 5S rRNA and the P site tRNA. Forms a bridge to the 30S subunit in the 70S ribosome.

In terms of biological role, this is one of the proteins that bind and probably mediate the attachment of the 5S RNA into the large ribosomal subunit, where it forms part of the central protuberance. In the 70S ribosome it contacts protein S13 of the 30S subunit (bridge B1b), connecting the 2 subunits; this bridge is implicated in subunit movement. Contacts the P site tRNA; the 5S rRNA and some of its associated proteins might help stabilize positioning of ribosome-bound tRNAs. The polypeptide is Large ribosomal subunit protein uL5 (Pediococcus pentosaceus (strain ATCC 25745 / CCUG 21536 / LMG 10740 / 183-1w)).